A 434-amino-acid polypeptide reads, in one-letter code: Histidine--tRNA ligase (434 aa).

Belongs to the class-II aminoacyl-tRNA synthetase family. Homodimer.

The protein localises to the cytoplasm. It carries out the reaction tRNA(His) + L-histidine + ATP = L-histidyl-tRNA(His) + AMP + diphosphate + H(+). This chain is Histidine--tRNA ligase, found in Latilactobacillus sakei subsp. sakei (strain 23K) (Lactobacillus sakei subsp. sakei).